The chain runs to 159 residues: MAKEPTKAAHPQPEQTKTNHKAHRPVGGYVLAKDPIEINQGRPRTTLTVRNTGDRPIQIGSHFHFFEVNRYLEFDRSKAFGLRLDIPANTAVRFEPGDEKEVTLVPFAGKRFIFGFNNLVDGWSGDGPTPDYQPNREIAAERAEKLGFKSCKSGGKDAK.

Residues 1-24 (MAKEPTKAAHPQPEQTKTNHKAHR) form a disordered region.

The protein belongs to the urease beta subunit family. As to quaternary structure, heterotrimer of UreA (gamma), UreB (beta) and UreC (alpha) subunits. Three heterotrimers associate to form the active enzyme.

It localises to the cytoplasm. It carries out the reaction urea + 2 H2O + H(+) = hydrogencarbonate + 2 NH4(+). It participates in nitrogen metabolism; urea degradation; CO(2) and NH(3) from urea (urease route): step 1/1. Functionally, disrupting the ure2 operon has no effect on urease activity, or pathogen survival in BALB/c mice when inoculated by gavage, but confers slightly enhanced resistance to low pH killing in vitro. This is Urease subunit beta 2 from Brucella suis biovar 1 (strain 1330).